Consider the following 862-residue polypeptide: MLRNSTFKNMQRRHTTLREKGRRQAIRGPAYMFNEKGTSLTPEEERFLDSAEYGNIPVVRKMLEESKTLNFNCVDYMGQNALQLAVGNEHLEVTELLLKKENLARVGDALLLAISKGYVRIVEAILNHPAFAQGQRLTLSPLEQELRDDDFYAYDEDGTRFSHDITPIILAAHCQEYEIVHILLLKGARIERPHDYFCKCNECTEKQRKDSFSHSRSRMNAYKGLASAAYLSLSSEDPVLTALELSNELARLANIETEFKNDYRKLSMQCKDFVVGVLDLCRDTEEVEAILNGDVNFQVWSDHHRPSLSRIKLAIKYEVKKFVAHPNCQQQLLTMWYENLSGLRQQSIAVKFLAVFGVSIGLPFLAIAYWIAPCSKLGRTLRSPFMKFVAHAVSFTIFLGLLVVNASDRFEGVKTLPNETFTDYPKQIFRVKTTQFSWTEMLIMKWVLGMIWSECKEIWEEGPREYVLHLWNLLDFGMLSIFVASFTARFMAFLKATEAQLYVDQHVQDDTLHNVSLPPEVAYFTYARDKWWPSDPQIISEGLYAIAVVLSFSRIAYILPANESFGPLQISLGRTVKDIFKFMVIFIMVFVAFMIGMFNLYSYYRGAKYNPAFTTVEESFKTLFWSIFGLSEVISVVLKYDHKFIENIGYVLYGVYNVTMVVVLLNMLIAMINNSYQEIEEDADVEWKFARAKLWLSYFDEGRTLPAPFNLVPSPKSFYYLIMRIKMCLIKLCKSKAKSCENDLEMGMLNSKFKKTRYQAGMRNSENLTANNTLSKPTRYQKIMKRLIKRYVLKAQVDRENDEVNEGELKEIKQDISSLRYELLEEKSQATGELADLIQQLSEKFGKNLNKDHLRVNKGKDI.

Residues 1 to 21 (MLRNSTFKNMQRRHTTLREKG) form a disordered region. Over 1–351 (MLRNSTFKNM…GLRQQSIAVK (351 aa)) the chain is Cytoplasmic. Basic residues predominate over residues 10-21 (MQRRHTTLREKG). Position 15 is a phosphothreonine; by PKG/PRKG1 (Thr-15). 4 ANK repeats span residues 42–71 (PEEE…TLNF), 77–106 (MGQN…LARV), 108–134 (DALL…FAQG), and 163–192 (HDIT…RIER). The chain crosses the membrane as a helical span at residues 352-372 (FLAVFGVSIGLPFLAIAYWIA). The Extracellular portion of the chain corresponds to 373–383 (PCSKLGRTLRS). The helical transmembrane segment at 384–404 (PFMKFVAHAVSFTIFLGLLVV) threads the bilayer. Residues 405–465 (NASDRFEGVK…KEIWEEGPRE (61 aa)) lie on the Cytoplasmic side of the membrane. The chain crosses the membrane as a helical span at residues 466 to 486 (YVLHLWNLLDFGMLSIFVASF). The Extracellular segment spans residues 487–537 (TARFMAFLKATEAQLYVDQHVQDDTLHNVSLPPEVAYFTYARDKWWPSDPQ). Asn-514 is a glycosylation site (N-linked (GlcNAc...) asparagine). Residues 538–558 (IISEGLYAIAVVLSFSRIAYI) traverse the membrane as a helical segment. Residues 559–581 (LPANESFGPLQISLGRTVKDIFK) lie on the Cytoplasmic side of the membrane. Residues 582 to 602 (FMVIFIMVFVAFMIGMFNLYS) traverse the membrane as a helical segment. Topologically, residues 603–651 (YYRGAKYNPAFTTVEESFKTLFWSIFGLSEVISVVLKYDHKFIENIGYV) are extracellular. A helical membrane pass occupies residues 652–672 (LYGVYNVTMVVVLLNMLIAMI). Residues 673–862 (NNSYQEIEED…HLRVNKGKDI (190 aa)) are Cytoplasmic-facing.

It belongs to the transient receptor (TC 1.A.4) family. STrpC subfamily. TRPC7 sub-subfamily. In terms of assembly, interacts with MX1 and RNF24. Interacts (via ANK-repeat domains) with PRKG1. Phosphorylation by PRKG1 at Thr-15 negatively regulates TRPC7 activity.

The protein localises to the cell membrane. The protein resides in the nucleus envelope. It catalyses the reaction Ca(2+)(in) = Ca(2+)(out). Functionally, forms a receptor-activated non-selective calcium permeant cation channel. Probably is operated by a phosphatidylinositol second messenger system activated by receptor tyrosine kinases or G-protein coupled receptors. Activated by diacylglycerol (DAG). May also be activated by intracellular calcium store depletion. The chain is Short transient receptor potential channel 7 (TRPC7) from Homo sapiens (Human).